A 125-amino-acid polypeptide reads, in one-letter code: Dirigent protein 22 (125 aa).

N-linked (GlcNAc...) asparagine glycans are attached at residues asparagine 8, asparagine 30, and asparagine 65.

Belongs to the plant dirigent protein family. In terms of assembly, homodimer.

The protein localises to the secreted. Its subcellular location is the extracellular space. The protein resides in the apoplast. In terms of biological role, dirigent proteins impart stereoselectivity on the phenoxy radical-coupling reaction, yielding optically active lignans from two molecules of coniferyl alcohol in the biosynthesis of lignans, flavonolignans, and alkaloids and thus plays a central role in plant secondary metabolism. This chain is Dirigent protein 22 (DIR22), found in Arabidopsis thaliana (Mouse-ear cress).